Consider the following 263-residue polypeptide: Type III pantothenate kinase (263 aa).

Residue 9-16 participates in ATP binding; sequence DIGNTNVK. Substrate is bound by residues Tyr-103 and 110-113; that span reads GADR. Asp-112 serves as the catalytic Proton acceptor. Asp-134 is a binding site for K(+). Thr-137 is a binding site for ATP. Thr-190 serves as a coordination point for substrate.

The protein belongs to the type III pantothenate kinase family. As to quaternary structure, homodimer. The cofactor is NH4(+). Requires K(+) as cofactor.

It localises to the cytoplasm. It carries out the reaction (R)-pantothenate + ATP = (R)-4'-phosphopantothenate + ADP + H(+). It participates in cofactor biosynthesis; coenzyme A biosynthesis; CoA from (R)-pantothenate: step 1/5. Its function is as follows. Catalyzes the phosphorylation of pantothenate (Pan), the first step in CoA biosynthesis. The polypeptide is Type III pantothenate kinase (Oleidesulfovibrio alaskensis (strain ATCC BAA-1058 / DSM 17464 / G20) (Desulfovibrio alaskensis)).